We begin with the raw amino-acid sequence, 256 residues long: Deoxyribose-phosphate aldolase (256 aa).

Catalysis depends on Asp102, which acts as the Proton donor/acceptor. Lys165 serves as the catalytic Schiff-base intermediate with acetaldehyde. The active-site Proton donor/acceptor is Lys197.

This sequence belongs to the DeoC/FbaB aldolase family. DeoC type 2 subfamily.

The protein resides in the cytoplasm. The catalysed reaction is 2-deoxy-D-ribose 5-phosphate = D-glyceraldehyde 3-phosphate + acetaldehyde. The protein operates within carbohydrate degradation; 2-deoxy-D-ribose 1-phosphate degradation; D-glyceraldehyde 3-phosphate and acetaldehyde from 2-deoxy-alpha-D-ribose 1-phosphate: step 2/2. In terms of biological role, catalyzes a reversible aldol reaction between acetaldehyde and D-glyceraldehyde 3-phosphate to generate 2-deoxy-D-ribose 5-phosphate. The chain is Deoxyribose-phosphate aldolase from Shewanella oneidensis (strain ATCC 700550 / JCM 31522 / CIP 106686 / LMG 19005 / NCIMB 14063 / MR-1).